Here is a 368-residue protein sequence, read N- to C-terminus: Protein-glutamate methylesterase/protein-glutamine glutaminase 2 (368 aa).

The Response regulatory domain occupies 6–123 (KVLLVDDSAV…KEYLESAAGE (118 aa)). Asp57 carries the post-translational modification 4-aspartylphosphate. Residues 169–355 (IAGANKIAAL…SLERIPQCVL (187 aa)) form the CheB-type methylesterase domain. Residues Ser181, His207, and Asp303 contribute to the active site.

The protein belongs to the CheB family. Phosphorylated by CheA. Phosphorylation of the N-terminal regulatory domain activates the methylesterase activity.

The protein localises to the cytoplasm. It carries out the reaction [protein]-L-glutamate 5-O-methyl ester + H2O = L-glutamyl-[protein] + methanol + H(+). The catalysed reaction is L-glutaminyl-[protein] + H2O = L-glutamyl-[protein] + NH4(+). In terms of biological role, involved in chemotaxis. Part of a chemotaxis signal transduction system that modulates chemotaxis in response to various stimuli. Catalyzes the demethylation of specific methylglutamate residues introduced into the chemoreceptors (methyl-accepting chemotaxis proteins or MCP) by CheR. Also mediates the irreversible deamidation of specific glutamine residues to glutamic acid. This is Protein-glutamate methylesterase/protein-glutamine glutaminase 2 from Hahella chejuensis (strain KCTC 2396).